A 457-amino-acid chain; its full sequence is Chromosomal replication initiator protein DnaA (457 aa).

The segment at 1–90 (MDTNNNIEKE…HSVDVRIEVA (90 aa)) is domain I, interacts with DnaA modulators. The tract at residues 91–112 (PKIQINAQSNINYKAIKTSVKD) is domain II. The interval 113-323 (SYTFENFVVG…GAIIKISVNA (211 aa)) is domain III, AAA+ region. Residues Gly153, Gly155, Lys156, and Thr157 each contribute to the ATP site. Residues 324 to 457 (NLMNASIDLN…DKKTAFNSSE (134 aa)) form a domain IV, binds dsDNA region.

It belongs to the DnaA family. As to quaternary structure, oligomerizes as a right-handed, spiral filament on DNA at oriC. Interacts via domain I with HobA. In a crystal with domains I and II of DnaA HobA forms tetramers with DnaA fragments bound at the dimer interface of the tetramer.

It is found in the cytoplasm. It localises to the cell inner membrane. Its function is as follows. Plays an essential role in the initiation and regulation of chromosomal replication. ATP-DnaA binds to the origin of replication (oriC) to initiate formation of the DNA replication initiation complex once per cell cycle. Binds the DnaA box (a 9 base pair repeat at the origin) and separates the double-stranded (ds)DNA. Forms a right-handed helical filament on oriC DNA; dsDNA binds to the exterior of the filament while single-stranded (ss)DNA is stabiized in the filament's interior. The ATP-DnaA-oriC complex binds and stabilizes one strand of the AT-rich DNA unwinding element (DUE), permitting loading of DNA polymerase. After initiation quickly degrades to an ADP-DnaA complex that is not apt for DNA replication. Binds acidic phospholipids. In terms of biological role, the DnaA box is 5'-TTATC[CA]A[CA]A-3' in this bacterium cycle. Multiple discrete DnaA-oriC complexes can be seen as DnaA levels increase. Binding of DnaA to oriC is increased by HobA; some chi-type structures can be seen by electron microscopy. Strand separation requires the DnaA boxes and adjacent DnaA-trio motifs but works equally well with ADP or ATP. The chain is Chromosomal replication initiator protein DnaA from Helicobacter pylori (strain ATCC 700392 / 26695) (Campylobacter pylori).